We begin with the raw amino-acid sequence, 214 residues long: Large ribosomal subunit protein bL25 (214 aa).

The disordered stretch occupies residues 187 to 214 (AEVAPSIEETVEPEVIKKGKKAEEEEEK). Over residues 200–214 (EVIKKGKKAEEEEEK) the composition is skewed to basic and acidic residues.

Belongs to the bacterial ribosomal protein bL25 family. CTC subfamily. As to quaternary structure, part of the 50S ribosomal subunit; part of the 5S rRNA/L5/L18/L25 subcomplex. Contacts the 5S rRNA. Binds to the 5S rRNA independently of L5 and L18.

Its function is as follows. This is one of the proteins that binds to the 5S RNA in the ribosome where it forms part of the central protuberance. The polypeptide is Large ribosomal subunit protein bL25 (Thermodesulfovibrio yellowstonii (strain ATCC 51303 / DSM 11347 / YP87)).